The sequence spans 44 residues: Photosystem I reaction center subunit IX (44 aa).

A helical transmembrane segment spans residues 9-29; the sequence is WFRSAPVVATIWIVLTAGILV.

The protein belongs to the PsaJ family.

The protein resides in the cellular thylakoid membrane. May help in the organization of the PsaE and PsaF subunits. This chain is Photosystem I reaction center subunit IX, found in Prochlorococcus marinus (strain MIT 9211).